The chain runs to 539 residues: Chaperonin GroEL (539 aa).

Residues 29–32 (TIGP), 86–90 (DGTTT), glycine 413, 476–478 (NAA), and aspartate 492 contribute to the ATP site.

This sequence belongs to the chaperonin (HSP60) family. As to quaternary structure, forms a cylinder of 14 subunits composed of two heptameric rings stacked back-to-back. Interacts with the co-chaperonin GroES.

The protein localises to the cytoplasm. The enzyme catalyses ATP + H2O + a folded polypeptide = ADP + phosphate + an unfolded polypeptide.. Functionally, together with its co-chaperonin GroES, plays an essential role in assisting protein folding. The GroEL-GroES system forms a nano-cage that allows encapsulation of the non-native substrate proteins and provides a physical environment optimized to promote and accelerate protein folding. In Staphylococcus epidermidis (strain ATCC 12228 / FDA PCI 1200), this protein is Chaperonin GroEL.